We begin with the raw amino-acid sequence, 203 residues long: Guanylate kinase (203 aa).

A Guanylate kinase-like domain is found at 5-183 (GVLYILSAPS…AVEELKSVII (179 aa)). 12–19 (APSGAGKT) contacts ATP.

It belongs to the guanylate kinase family.

Its subcellular location is the cytoplasm. It carries out the reaction GMP + ATP = GDP + ADP. In terms of biological role, essential for recycling GMP and indirectly, cGMP. This is Guanylate kinase from Geobacter sulfurreducens (strain ATCC 51573 / DSM 12127 / PCA).